The chain runs to 357 residues: Probable leucine aminopeptidase MCYG_04170 (357 aa).

The first 15 residues, 1-15 (MKVLAALALSALALA), serve as a signal peptide directing secretion. Residue N76 is glycosylated (N-linked (GlcNAc...) asparagine). Zn(2+) contacts are provided by H167 and D185. N186 is a glycosylation site (N-linked (GlcNAc...) asparagine). E224 and D251 together coordinate Zn(2+). C291 and C295 are joined by a disulfide. H324 is a binding site for Zn(2+).

It belongs to the peptidase M28 family. M28E subfamily. As to quaternary structure, monomer. Requires Zn(2+) as cofactor.

Its subcellular location is the secreted. In terms of biological role, probable extracellular aminopeptidase which contributes to pathogenicity. The chain is Probable leucine aminopeptidase MCYG_04170 from Arthroderma otae (strain ATCC MYA-4605 / CBS 113480) (Microsporum canis).